Here is a 125-residue protein sequence, read N- to C-terminus: Large ribosomal subunit protein bL21 (125 aa).

The protein belongs to the bacterial ribosomal protein bL21 family. As to quaternary structure, part of the 50S ribosomal subunit. Contacts protein L20.

This protein binds to 23S rRNA in the presence of protein L20. This chain is Large ribosomal subunit protein bL21, found in Synechococcus sp. (strain CC9311).